Here is a 240-residue protein sequence, read N- to C-terminus: Inhibitor of growth protein 5 (240 aa).

The residue at position 114 (K114) is an N6-acetyllysine. Positions 116–165 (EGSDFESSGGRGLKKGRGQKEKRGSRGRGRRTSEEDTPKKKKHKGGSEFT) are disordered. Residue S118 is modified to Phosphoserine. R126 is modified (omega-N-methylarginine). The PHD-type zinc-finger motif lies at 186 to 235 (PTYCLCHQVSYGEMIGCDNPDCPIEWFHFACVDLTTKPKGKWFCPRCVQE). Zn(2+) contacts are provided by C189, C191, C202, C207, H213, C216, C229, and C232.

The protein belongs to the ING family. In terms of assembly, component of the HBO1 complex composed of KAT7/HBO1, MEAF6, ING5, and one scaffold subunit: complexes containing BRPF scaffold (BRPF1, BRD1/BRPF2 or BRPF3) direct KAT7/HBO1 specificity towards H3K14ac, while complexes containing JADE scaffold (JADE1, JADE2 and JADE3) mediate acetylation of histone H4. Component of the MOZ/MORF complex composed at least of ING5, KAT6A, KAT6B, MEAF6 and one of BRPF1, BRD1/BRPF2 and BRPF3. Interacts with H3K4me3 and to a lesser extent with H3K4me2. Interacts with EP300 and p53/TP53. Interacts with INCA1. Down-regulated in bone marrow cells in acute myeloid leukemia patients as compared with normal bone marrow cells.

The protein localises to the nucleus. Its subcellular location is the chromosome. Its function is as follows. Component of the HBO1 complex, which specifically mediates acetylation of histone H3 at 'Lys-14' (H3K14ac) and, to a lower extent, acetylation of histone H4. Component of the MOZ/MORF complex which has a histone H3 acetyltransferase activity. Through chromatin acetylation it may regulate DNA replication and may function as a transcriptional coactivator. Inhibits cell growth, induces a delay in S-phase progression and enhances Fas-induced apoptosis in an INCA1-dependent manner. This chain is Inhibitor of growth protein 5 (ING5), found in Homo sapiens (Human).